We begin with the raw amino-acid sequence, 243 residues long: Ice-binding protein K1-A (243 aa).

The signal sequence occupies residues M1–A20.

The protein belongs to the ice-binding protein family.

The protein localises to the secreted. Functionally, binds to the surface of ice crystals. Inhibits growth of the ice crystals. Has antifreeze activity for survival under snow cover. Has high thermal hysteresis (TH) activity, which is the ability to lower the freezing point of an aqueous solution below its melting point, and thus the freezing of the cell fluid can be prevented protecting the organism from ice damage. The TH activity of this protein is 2.0 degrees Celsius at 0.11 mM. The chain is Ice-binding protein K1-A from Typhula ishikariensis (Gray snow mold fungus).